A 276-amino-acid chain; its full sequence is Apulose-4-phosphate transketolase subunit A (276 aa).

The protein belongs to the transketolase family. Probable heterodimer composed of AptA and AptB. Requires thiamine diphosphate as cofactor.

It carries out the reaction apulose 4-phosphate + D-glyceraldehyde 3-phosphate = D-xylulose 5-phosphate + dihydroxyacetone phosphate. Its pathway is carbohydrate metabolism. Its function is as follows. Involved in catabolism of D-apiose. Catalyzes the transfer of the glycolaldehyde group from apulose-4-phosphate to D-glyceraldehyde 3-phosphate, generating dihydroxyacetone phosphate and D-xylulose-5-phosphate. This chain is Apulose-4-phosphate transketolase subunit A, found in Actinobacillus succinogenes (strain ATCC 55618 / DSM 22257 / CCUG 43843 / 130Z).